The following is a 155-amino-acid chain: Ribonuclease H (155 aa).

Residues 1 to 142 (MLKQVEIFTD…CDELARAAAM (142 aa)) enclose the RNase H type-1 domain. Mg(2+)-binding residues include Asp10, Glu48, Asp70, and Asp134.

This sequence belongs to the RNase H family. In terms of assembly, monomer. The cofactor is Mg(2+).

The protein localises to the cytoplasm. It catalyses the reaction Endonucleolytic cleavage to 5'-phosphomonoester.. Functionally, endonuclease that specifically degrades the RNA of RNA-DNA hybrids. The protein is Ribonuclease H of Escherichia coli O127:H6 (strain E2348/69 / EPEC).